A 229-amino-acid chain; its full sequence is 2-C-methyl-D-erythritol 4-phosphate cytidylyltransferase (229 aa).

This sequence belongs to the IspD/TarI cytidylyltransferase family. IspD subfamily.

The enzyme catalyses 2-C-methyl-D-erythritol 4-phosphate + CTP + H(+) = 4-CDP-2-C-methyl-D-erythritol + diphosphate. Its pathway is isoprenoid biosynthesis; isopentenyl diphosphate biosynthesis via DXP pathway; isopentenyl diphosphate from 1-deoxy-D-xylulose 5-phosphate: step 2/6. Its function is as follows. Catalyzes the formation of 4-diphosphocytidyl-2-C-methyl-D-erythritol from CTP and 2-C-methyl-D-erythritol 4-phosphate (MEP). The chain is 2-C-methyl-D-erythritol 4-phosphate cytidylyltransferase from Neisseria meningitidis serogroup B (strain ATCC BAA-335 / MC58).